Here is a 193-residue protein sequence, read N- to C-terminus: CASP-like protein 1E1 (193 aa).

Topologically, residues 1 to 30 (MESQNKASLPVMDGLERRVVASQSEGASTC) are cytoplasmic. A helical membrane pass occupies residues 31–51 (DLLLRVLALVLTLAAAIVLGV). Residues 52–86 (DKQTKVVPIKIVDTLPAINLPVSAKWHYLSAFTYS) lie on the Extracellular side of the membrane. A helical transmembrane segment spans residues 87 to 107 (VASNAIACSYAALSLVLAVSG). The Cytoplasmic segment spans residues 108-113 (KKGIMS). Residues 114–134 (IVIVLDLLMVAMLFSSNGAAL) form a helical membrane-spanning segment. Over 135-162 (AIGLMGYQGNSHVRWTKVCHVFGRFCNQ) the chain is Extracellular. The helical transmembrane segment at 163–183 (VAVSISLSLLGSILFLLLVGI) threads the bilayer. Topologically, residues 184 to 193 (TSLRLHKKSK) are cytoplasmic.

It belongs to the Casparian strip membrane proteins (CASP) family. In terms of assembly, homodimer and heterodimers.

It localises to the cell membrane. This chain is CASP-like protein 1E1, found in Populus trichocarpa (Western balsam poplar).